The sequence spans 211 residues: Endonuclease III (211 aa).

Positions 111-130 (AHALESLPGVGHKTANVVLN) constitute a HhH domain. Residues cysteine 190, cysteine 197, cysteine 200, and cysteine 206 each contribute to the [4Fe-4S] cluster site.

It belongs to the Nth/MutY family. It depends on [4Fe-4S] cluster as a cofactor.

The catalysed reaction is 2'-deoxyribonucleotide-(2'-deoxyribose 5'-phosphate)-2'-deoxyribonucleotide-DNA = a 3'-end 2'-deoxyribonucleotide-(2,3-dehydro-2,3-deoxyribose 5'-phosphate)-DNA + a 5'-end 5'-phospho-2'-deoxyribonucleoside-DNA + H(+). Functionally, DNA repair enzyme that has both DNA N-glycosylase activity and AP-lyase activity. The DNA N-glycosylase activity releases various damaged pyrimidines from DNA by cleaving the N-glycosidic bond, leaving an AP (apurinic/apyrimidinic) site. The AP-lyase activity cleaves the phosphodiester bond 3' to the AP site by a beta-elimination, leaving a 3'-terminal unsaturated sugar and a product with a terminal 5'-phosphate. This is Endonuclease III from Treponema pallidum (strain Nichols).